The following is a 391-amino-acid chain: Metallophosphoesterase 1 (391 aa).

A helical membrane pass occupies residues 25–45 (TVVIISVLLFCEYFIYHLVIF). Positions 72, 114, 152, 244, 298, and 300 each coordinate a divalent metal cation. A helical transmembrane segment spans residues 352 to 372 (VLATYGAAAVFLVVLILAHLE).

Belongs to the metallophosphoesterase superfamily. MPPE1 family. Interacts with GPI-anchor proteins (via the GPI portion). Interacts with TMED10. It depends on Mn(2+) as a cofactor.

The protein localises to the endoplasmic reticulum-Golgi intermediate compartment membrane. In terms of biological role, metallophosphoesterase that catalyzes the removal of a side-chain ethanolamine-phosphate (EtNP) from the second mannose of the GPI-anchor protein intermediate. Participates in the glycan remodeling steps of GPI-anchor maturation to allow an efficient transport of GPI-anchor proteins from the endoplasmic reticulum to the Golgi. In Cricetulus griseus (Chinese hamster), this protein is Metallophosphoesterase 1.